Here is a 176-residue protein sequence, read N- to C-terminus: Peptidyl-prolyl cis-trans isomerase cyp5 (176 aa).

A PPIase cyclophilin-type domain is found at 10-173 (FFDVAVNGKP…AKVEIVDCGE (164 aa)).

Belongs to the cyclophilin-type PPIase family.

The catalysed reaction is [protein]-peptidylproline (omega=180) = [protein]-peptidylproline (omega=0). In terms of biological role, PPIases accelerate the folding of proteins. It catalyzes the cis-trans isomerization of proline imidic peptide bonds in oligopeptides. The protein is Peptidyl-prolyl cis-trans isomerase cyp5 (cyp5) of Rhizopus delemar (strain RA 99-880 / ATCC MYA-4621 / FGSC 9543 / NRRL 43880) (Mucormycosis agent).